Reading from the N-terminus, the 689-residue chain is MSQRRLFVTTALPYANGNFHIGHIMEYIQADIWVRYQRMQGHEVNFVGADDAHGAPIMIAAEKAGKTPQQFVADIAAGRKPYLDGFHISFDNWHSTDGPENHQLAQQIYLDLKKAGLIETKTVEQFFDPDKNMFLPDRFIKGQCPKCGAKDQYGDNCEVCGAVYAPTDLINPYSALSGATPVLKSSEHFFFRLSDPRCVAFLEQWTQDGMLQTEVANKVKEWFSPRQNVDGTTSEGLDDWDISRDAPYFGIEIPDAPGKYFYVWLDAPVGYLASLKNLLDKKGLDYDAYMADPGLEQYHFIGKDIITFHTLFWPAMLHFSGRKTPDNVFVHGFLTVNNGEKMSKSRGTGLDPLKYLNLGMNPEWLRYYLAAKLNARNEDIDFNPEDFMARVNADLVGKYINIASRAAGFISKRFDGRLGEPSADGDALLEVLRGASPAIQELYAEREYGKALREVMQLADRVNGYVDQNKPWELAKQPGMEARLLDVCTVCIEAFRLLTIYLKPVLPALGTQVEDFLKTGSLTFRDAGASLGSGHVIGEYKHLMQRVDVKQLDALFEPPAAAPEPAQLTPGGEALAAPITIDDFAKVDLRIAKIVNCEAVEGSTKLLRLTLDVGEGKMRNVFSGIASAYTPDQLIGKHTVVVANLAPRKMKFGVSEGMVLAASHADEKAQPGIYVLEPLPGASPGLRVR.

A 'HIGH' region motif is present at residues 13 to 23; it reads PYANGNFHIGH. Zn(2+)-binding residues include cysteine 144, cysteine 147, cysteine 157, and cysteine 160. The 'KMSKS' region signature appears at 341–345; it reads KMSKS. Lysine 344 provides a ligand contact to ATP. Residues 583–689 form the tRNA-binding domain; that stretch reads DFAKVDLRIA…PGASPGLRVR (107 aa).

The protein belongs to the class-I aminoacyl-tRNA synthetase family. MetG type 1 subfamily. In terms of assembly, homodimer. Requires Zn(2+) as cofactor.

It localises to the cytoplasm. The enzyme catalyses tRNA(Met) + L-methionine + ATP = L-methionyl-tRNA(Met) + AMP + diphosphate. In terms of biological role, is required not only for elongation of protein synthesis but also for the initiation of all mRNA translation through initiator tRNA(fMet) aminoacylation. In Polaromonas sp. (strain JS666 / ATCC BAA-500), this protein is Methionine--tRNA ligase.